The following is a 364-amino-acid chain: Fructose-1,6-bisphosphatase class 1 1 (364 aa).

Mg(2+) is bound by residues Glu99, Asp121, Leu123, and Asp124. Substrate-binding positions include 124 to 127 (DGSS) and Asn220. A Mg(2+)-binding site is contributed by Glu292.

Belongs to the FBPase class 1 family. In terms of assembly, homotetramer. It depends on Mg(2+) as a cofactor.

The protein localises to the cytoplasm. It catalyses the reaction beta-D-fructose 1,6-bisphosphate + H2O = beta-D-fructose 6-phosphate + phosphate. It functions in the pathway carbohydrate biosynthesis; gluconeogenesis. The protein is Fructose-1,6-bisphosphatase class 1 1 of Albidiferax ferrireducens (strain ATCC BAA-621 / DSM 15236 / T118) (Rhodoferax ferrireducens).